The sequence spans 495 residues: uncharacterized protein (495 aa).

Residues 389–457 (PLPNNGACEH…KDATCPHCGN (69 aa)) form a CHY-type zinc finger. Cys396, His398, Cys410, Cys411, Cys417, Cys420, His421, His427, Cys437, Cys440, Cys452, and Cys455 together coordinate Zn(2+). Residues 473–483 (GMRDRVRMSRK) are compositionally biased toward basic and acidic residues. The tract at residues 473-495 (GMRDRVRMSRKDPRKYKRKHHGN) is disordered. The span at 484 to 495 (DPRKYKRKHHGN) shows a compositional bias: basic residues.

Its subcellular location is the cytoplasm. This is an uncharacterized protein from Schizosaccharomyces pombe (strain 972 / ATCC 24843) (Fission yeast).